Here is a 521-residue protein sequence, read N- to C-terminus: NAD(P)H-quinone oxidoreductase subunit 2 (521 aa).

14 helical membrane passes run 15–35, 42–62, 79–99, 109–126, 131–153, 167–187, 208–228, 242–262, 276–296, 304–324, 332–352, 376–396, 398–418, and 464–484; these read ILPEGVLVISLILVLLGDITF, WTPYLAIASLAACLYLLYTQW, LSIVFRAIIALSTLVTILMSV, IGEFMTVLLTATVGAMFL, ELVMIFISLETLSIASYLMTGYM, LLIGAASSAVFLYGLSLLYGL, LALVISLVFVIASVSFKIAAV, PTPVVAFLSVGSKAAGFALAI, WQFIFTALAILSMVLGNVVAI, MLAYSSIGQAGFVMIGLVIGT, VFYLLIYLFMNLGAFTCVILF, LALSLCLLSLGGIPPLAGFFG, LYLFWAGWQAGAYGLVLLGLI, and VGLVLTLIATSLAGVLSNPLL.

The protein belongs to the complex I subunit 2 family. As to quaternary structure, NDH-1 can be composed of about 15 different subunits; different subcomplexes with different compositions have been identified which probably have different functions.

It is found in the cellular thylakoid membrane. The catalysed reaction is a plastoquinone + NADH + (n+1) H(+)(in) = a plastoquinol + NAD(+) + n H(+)(out). The enzyme catalyses a plastoquinone + NADPH + (n+1) H(+)(in) = a plastoquinol + NADP(+) + n H(+)(out). NDH-1 shuttles electrons from an unknown electron donor, via FMN and iron-sulfur (Fe-S) centers, to quinones in the respiratory and/or the photosynthetic chain. The immediate electron acceptor for the enzyme in this species is believed to be plastoquinone. Couples the redox reaction to proton translocation, and thus conserves the redox energy in a proton gradient. Cyanobacterial NDH-1 also plays a role in inorganic carbon-concentration. The polypeptide is NAD(P)H-quinone oxidoreductase subunit 2 (Acaryochloris marina (strain MBIC 11017)).